Here is a 208-residue protein sequence, read N- to C-terminus: Interleukin-6 (208 aa).

Residues 1–29 form the signal peptide; it reads MNSLFTSAFSPLAVSLGLLLVMTSAFPTP. N-linked (GlcNAc...) asparagine glycosylation is present at Asn38. Cysteines 72 and 78 form a disulfide. A Phosphoserine modification is found at Ser81. A disulfide bridge links Cys101 with Cys111.

It belongs to the IL-6 superfamily. As to quaternary structure, component of a hexamer of two molecules each of IL6, IL6R and IL6ST; first binds to IL6R to associate with the signaling subunit IL6ST. Interacts with IL6R (via the N-terminal ectodomain); this interaction may be affected by IL6R-binding with SORL1, hence decreasing IL6 cis signaling. Interacts with SORL1 (via the N-terminal ectodomain); this interaction leads to IL6 internalization and lysosomal degradation. May form a trimeric complex with the soluble SORL1 ectodomain and soluble IL6R receptor; this interaction might stabilize circulating IL6, hence promoting IL6 trans signaling.

The protein resides in the secreted. Cytokine with a wide variety of biological functions in immunity, tissue regeneration, and metabolism. Binds to IL6R, then the complex associates to the signaling subunit IL6ST/gp130 to trigger the intracellular IL6-signaling pathway. The interaction with the membrane-bound IL6R and IL6ST stimulates 'classic signaling', whereas the binding of IL6 and soluble IL6R to IL6ST stimulates 'trans-signaling'. Alternatively, 'cluster signaling' occurs when membrane-bound IL6:IL6R complexes on transmitter cells activate IL6ST receptors on neighboring receiver cells. Functionally, IL6 is a potent inducer of the acute phase response. Rapid production of IL6 contributes to host defense during infection and tissue injury, but excessive IL6 synthesis is involved in disease pathology. In the innate immune response, is synthesized by myeloid cells, such as macrophages and dendritic cells, upon recognition of pathogens through toll-like receptors (TLRs) at the site of infection or tissue injury. In the adaptive immune response, is required for the differentiation of B cells into immunoglobulin-secreting cells. Plays a major role in the differentiation of CD4(+) T cell subsets. Essential factor for the development of T follicular helper (Tfh) cells that are required for the induction of germinal-center formation. Required to drive naive CD4(+) T cells to the Th17 lineage. Also required for proliferation of myeloma cells and the survival of plasmablast cells. In terms of biological role, acts as an essential factor in bone homeostasis and on vessels directly or indirectly by induction of VEGF, resulting in increased angiogenesis activity and vascular permeability. Induces, through 'trans-signaling' and synergistically with IL1B and TNF, the production of VEGF. Involved in metabolic controls, is discharged into the bloodstream after muscle contraction increasing lipolysis and improving insulin resistance. 'Trans-signaling' in central nervous system also regulates energy and glucose homeostasis. Mediates, through GLP-1, crosstalk between insulin-sensitive tissues, intestinal L cells and pancreatic islets to adapt to changes in insulin demand. Also acts as a myokine. Plays a protective role during liver injury, being required for maintenance of tissue regeneration. Also has a pivotal role in iron metabolism by regulating HAMP/hepcidin expression upon inflammation or bacterial infection. Through activation of IL6ST-YAP-NOTCH pathway, induces inflammation-induced epithelial regeneration. The sequence is that of Interleukin-6 (IL6) from Capra hircus (Goat).